The chain runs to 159 residues: Serine-protein kinase RsbW (159 aa).

This sequence belongs to the anti-sigma-factor family.

It catalyses the reaction L-seryl-[protein] + ATP = O-phospho-L-seryl-[protein] + ADP + H(+). The catalysed reaction is L-threonyl-[protein] + ATP = O-phospho-L-threonyl-[protein] + ADP + H(+). Functionally, negative regulator of sigma-B activity. Phosphorylates and inactivates its specific antagonist protein, RsbV. Upon phosphorylation of RsbV, RsbW is released and binds to sigma-B, thereby blocking its ability to form an RNA polymerase holoenzyme (E-sigma-B). In Staphylococcus aureus, this protein is Serine-protein kinase RsbW.